The chain runs to 156 residues: Small ribosomal subunit protein uS7c (156 aa).

It belongs to the universal ribosomal protein uS7 family. Part of the 30S ribosomal subunit.

It is found in the plastid. It localises to the chloroplast. Its function is as follows. One of the primary rRNA binding proteins, it binds directly to 16S rRNA where it nucleates assembly of the head domain of the 30S subunit. The chain is Small ribosomal subunit protein uS7c (rps7) from Gracilaria tenuistipitata var. liui (Red alga).